Reading from the N-terminus, the 106-residue chain is ATP-dependent Clp protease adapter protein ClpS (106 aa).

Positions M1 to Q14 are enriched in basic and acidic residues. The segment at M1–Q21 is disordered.

This sequence belongs to the ClpS family. In terms of assembly, binds to the N-terminal domain of the chaperone ClpA.

In terms of biological role, involved in the modulation of the specificity of the ClpAP-mediated ATP-dependent protein degradation. The polypeptide is ATP-dependent Clp protease adapter protein ClpS (Alkalilimnicola ehrlichii (strain ATCC BAA-1101 / DSM 17681 / MLHE-1)).